Reading from the N-terminus, the 702-residue chain is Neurochondrin (702 aa).

Belongs to the neurochondrin family.

The protein resides in the cytoplasm. Its subcellular location is the cytosol. The protein localises to the cell projection. It is found in the dendrite. It localises to the postsynapse. Its function is as follows. Probably involved in signal transduction, in the nervous system. Required for the spatial learning process. May also be involved in neurite outgrowth. The protein is Neurochondrin (NCDN) of Gallus gallus (Chicken).